The chain runs to 440 residues: Cytochrome b (440 aa).

Residues 46–66 (IWGIVLAFCLVLQIATGIVLV) form a helical membrane-spanning segment. Residues H97 and H111 each contribute to the heme b site. Transmembrane regions (helical) follow at residues 100–120 (GASL…YYGS), 129–149 (WIVG…GYVL), 156–176 (FWGA…GEAI), 194–214 (FFSL…VHIW), 253–273 (LFAL…MPNY), 296–315 (WYFL…VWVV), 330–350 (FFGV…PWLD), 365–385 (WWFW…AMPA), and 394–414 (LAGS…LGII). Residues H198 and H212 each coordinate heme b.

Belongs to the cytochrome b family. The main subunits of complex b-c1 are: cytochrome b, cytochrome c1 and the Rieske protein. It depends on heme b as a cofactor.

The protein localises to the cell membrane. In terms of biological role, component of the ubiquinol-cytochrome c reductase complex (complex III or cytochrome b-c1 complex), which is a respiratory chain that generates an electrochemical potential coupled to ATP synthesis. In Paracoccus denitrificans, this protein is Cytochrome b (petB).